Reading from the N-terminus, the 220-residue chain is Germin-like protein subfamily 2 member 4 (220 aa).

An N-terminal signal peptide occupies residues 1-21 (MDSRCFGFFFTLLSLNVIVLA). C31 and C46 are disulfide-bonded. Residues N51 and N69 are each glycosylated (N-linked (GlcNAc...) asparagine). One can recognise a Cupin type-1 domain in the interval 58–209 (FFAGIGKPAV…TFQIGTKEIE (152 aa)). H108, H110, E115, and H154 together coordinate Mn(2+).

This sequence belongs to the germin family. In terms of assembly, oligomer (believed to be a pentamer but probably hexamer).

It localises to the secreted. Its subcellular location is the extracellular space. The protein localises to the apoplast. In terms of biological role, may play a role in plant defense. Probably has no oxalate oxidase activity even if the active site is conserved. In Arabidopsis thaliana (Mouse-ear cress), this protein is Germin-like protein subfamily 2 member 4 (GLP10).